An 819-amino-acid polypeptide reads, in one-letter code: MRYDPGLIEEKWQKFWKNEQVFKAEEDETKTKYYVLDMFPYPSGAGLHVGHLIGYTATDIVARYKRAQGFSVLHPMGWDSFGLPAEQYAIRTGTHPRETTEKNIANFKKQLTAMGFSYDESREFATSDPEYYKWTQKLFLILYEKGLAYMADMAVNYCPELGTVLSNEEIENGFSVDGGYPVERRMLRQWVLRITAFADQLLEGLDELDWPESVKQLQKNWIGKSSGASVNFATEHGAIEVFTTRPDTLIGVSFLALAPEHPLVDLLTSDEQKAVVAQYIKETQSKSERDRISEMKTKSGVFTGSYAKHPVTHELIPIWIADYVLIGFGSGAVMGVPAHDERDLLFAEQFNLPVVSVLNKEGVCINSCCEGFHLDGLSGEEAKQYVINFLEENHLGAAKIAYKLRDWLFSRQRYWGEPIPIIHFEDGSCRPLRDYELPLLPPEIQDYRPEGVGQGPLAKVREWVQVFDTETQRAGKRETHTMPQWAGSCWYYLRFCDAHNSAAPWAKEKEQYWMPVDLYIGGAEHAVLHLLYARFWHQIFYEAGIVSTPEPFKKLVNQGLVLATSYRIPGKGYIYPEIAKEENGKWVAPSGEELDVRQEKMSKSKLNGVDPQILIDEFGADAVRMYAMFSGPLDKNKLWSNQGVAGCRRFLNRFYEMVSSDRVKEDNNFEGLSLAHKLVQRVTDAIEKLSLNTIPSSFMEFINDFVKLAVYPKSAVEMAVRALAPIAPHISEELWVLLGNSPGVQKSGWPSVLPEYLEGQTVTIVVQVNGKLRARLDIMKDASKEEVLALARESASKYLEGCEVKEAIFVPARLVNFVV.

A 'HIGH' region motif is present at residues 40-51 (PYPSGAGLHVGH). The 'KMSKS' region motif lies at 600-604 (KMSKS). Lys-603 lines the ATP pocket.

This sequence belongs to the class-I aminoacyl-tRNA synthetase family.

The protein resides in the cytoplasm. The enzyme catalyses tRNA(Leu) + L-leucine + ATP = L-leucyl-tRNA(Leu) + AMP + diphosphate. This chain is Leucine--tRNA ligase, found in Chlamydia trachomatis serovar A (strain ATCC VR-571B / DSM 19440 / HAR-13).